The primary structure comprises 513 residues: Alpha-1B-glycoprotein (513 aa).

The N-terminal stretch at 1 to 20 (MSLLTTVLLLWGFTLGPGNA) is a signal peptide. Ig-like V-type domains are found at residues 22-126 (WLDS…VTGK), 127-219 (EPLP…MSAT), 220-312 (QLPP…PVEL), 313-415 (MWSD…LRIN), and 416-513 (GPAP…VEGS). N-linked (GlcNAc...) asparagine glycans are attached at residues asparagine 44, asparagine 89, and asparagine 192. Cystine bridges form between cysteine 49–cysteine 96, cysteine 153–cysteine 195, cysteine 245–cysteine 292, cysteine 343–cysteine 392, and cysteine 441–cysteine 488. N-linked (GlcNAc...) asparagine glycans are attached at residues asparagine 369, asparagine 381, asparagine 389, and asparagine 485.

In terms of assembly, interacts with CRISP3. In terms of tissue distribution, isoform 1 is expressed in normal liver. Isoform 2 is expressed in the regenerating liver after partial hepatectomy and at very low levels in the normal lung, brain and testis.

The protein localises to the secreted. The polypeptide is Alpha-1B-glycoprotein (Rattus norvegicus (Rat)).